The chain runs to 45 residues: Alpha-conotoxin-like Lp1.10 (45 aa).

Residues 1–27 (VVLGPASDGRNAAANVKAPDLIALTVR) constitute a propeptide that is removed on maturation. Intrachain disulfides connect Cys30-Cys36 and Cys31-Cys44. The segment at 32–34 (HNA) is lacks the Ser-Xaa-Pro motif that is crucial for potent interaction with nAChR. At Cys44 the chain carries Cysteine amide.

Belongs to the conotoxin A superfamily. As to expression, expressed by the venom duct.

The protein localises to the secreted. In terms of biological role, alpha-conotoxins act on postsynaptic membranes, they bind to the nicotinic acetylcholine receptors (nAChR) and thus inhibit them. Has possibly a distinct nAChR binding mode from other alpha-conotoxins, due to a different three residue motif (lacks the Ser-Xaa-Pro motif). This Conus leopardus (Leopard cone) protein is Alpha-conotoxin-like Lp1.10.